Reading from the N-terminus, the 184-residue chain is Ribosome-recycling factor (184 aa).

Belongs to the RRF family.

The protein localises to the cytoplasm. Responsible for the release of ribosomes from messenger RNA at the termination of protein biosynthesis. May increase the efficiency of translation by recycling ribosomes from one round of translation to another. The protein is Ribosome-recycling factor of Agathobacter rectalis (strain ATCC 33656 / DSM 3377 / JCM 17463 / KCTC 5835 / VPI 0990) (Eubacterium rectale).